An 878-amino-acid polypeptide reads, in one-letter code: Phosphoenolpyruvate carboxylase (878 aa).

Active-site residues include histidine 137 and lysine 545.

Belongs to the PEPCase type 1 family. It depends on Mg(2+) as a cofactor.

It catalyses the reaction oxaloacetate + phosphate = phosphoenolpyruvate + hydrogencarbonate. In terms of biological role, forms oxaloacetate, a four-carbon dicarboxylic acid source for the tricarboxylic acid cycle. This is Phosphoenolpyruvate carboxylase from Yersinia pestis bv. Antiqua (strain Antiqua).